The primary structure comprises 323 residues: tRNA U34 carboxymethyltransferase (323 aa).

Residues Lys91, Trp105, Lys110, Gly130, 152-154, 181-182, Met196, Tyr200, and Arg315 each bind carboxy-S-adenosyl-L-methionine; these read DPT and IE.

Belongs to the class I-like SAM-binding methyltransferase superfamily. CmoB family. In terms of assembly, homotetramer.

The catalysed reaction is carboxy-S-adenosyl-L-methionine + 5-hydroxyuridine(34) in tRNA = 5-carboxymethoxyuridine(34) in tRNA + S-adenosyl-L-homocysteine + H(+). In terms of biological role, catalyzes carboxymethyl transfer from carboxy-S-adenosyl-L-methionine (Cx-SAM) to 5-hydroxyuridine (ho5U) to form 5-carboxymethoxyuridine (cmo5U) at position 34 in tRNAs. This is tRNA U34 carboxymethyltransferase from Shigella flexneri serotype 5b (strain 8401).